The primary structure comprises 283 residues: UPF0273 protein STK_18300 (283 aa).

The KaiC domain occupies 4-249; sequence LRVRTYIPGF…YLRITNVKAE (246 aa). 31 to 38 contributes to the ATP binding site; it reads GGPGTGKS. Positions 261-283 are disordered; that stretch reads MKKAVEESEEEKESIQEAEIEEE. The span at 267 to 283 shows a compositional bias: acidic residues; the sequence is ESEEEKESIQEAEIEEE.

This sequence belongs to the UPF0273 family.

The sequence is that of UPF0273 protein STK_18300 from Sulfurisphaera tokodaii (strain DSM 16993 / JCM 10545 / NBRC 100140 / 7) (Sulfolobus tokodaii).